A 314-amino-acid chain; its full sequence is WD repeat domain-containing protein 83 (314 aa).

7 WD repeats span residues 23–62, 65–104, 107–146, 151–188, 189–228, 231–272, and 275–313; these read CNQG…LLKT, GHGY…VVRK, GHAG…PEAI, EAKD…MCAD, YLGS…LLGE, GHQN…LVLK, and VGKA…EEGG.

The protein belongs to the WD repeat MORG1 family.

It localises to the cytoplasm. Molecular scaffold protein for various multimeric protein complexes. Acts as a module in the assembly of a multicomponent scaffold for the ERK pathway, linking ERK responses to specific agonists. Also involved in response to hypoxia by acting as a negative regulator of HIF1A/HIF-1-alpha. The chain is WD repeat domain-containing protein 83 (wdr83) from Xenopus tropicalis (Western clawed frog).